The following is a 428-amino-acid chain: MIDPKLLRQDLTELKQKLAKRGYELDVDFWQQMESQRKSLQVITEDLQAKRNAGAKQVGVLKKNGEDATELLAEMQNISSEMKQAEESLKALQDKINQAALQIPNIPADDVPEGSSEEDNVEVRKWGTPRQFDFKVQEHSDLGEVLGQLDFAAAAKLTGSRFSVLKGQLAQLHRALIQFMLNTHTVKYGYTECYVPYIVNSDSLEGTGQLPKFEEDLFKLTNHTNNEAMGFYLIPTAEVPMTNLVRGERLDASELPLKFTAHTPCFRSEAGSHGRDTRGLIRQHQFEKVEMVNIATAAQSDELLEQMTGQAEYILQQLQLPYRVVKLCTGDMGFSALRTYDIEVWVPSQDTYREISSCSNCGDFQARRMGTRVKEGKKTELVHTLNGSGLAVGRTLLAIMENHQNADGSITIPEVLRPYMGGAEIISA.

236 to 238 (TAE) is a binding site for L-serine. An ATP-binding site is contributed by 267 to 269 (RSE). Glu290 contacts L-serine. Residue 354–357 (EISS) participates in ATP binding. Ser388 provides a ligand contact to L-serine.

It belongs to the class-II aminoacyl-tRNA synthetase family. Type-1 seryl-tRNA synthetase subfamily. Homodimer. The tRNA molecule binds across the dimer.

The protein resides in the cytoplasm. The enzyme catalyses tRNA(Ser) + L-serine + ATP = L-seryl-tRNA(Ser) + AMP + diphosphate + H(+). The catalysed reaction is tRNA(Sec) + L-serine + ATP = L-seryl-tRNA(Sec) + AMP + diphosphate + H(+). The protein operates within aminoacyl-tRNA biosynthesis; selenocysteinyl-tRNA(Sec) biosynthesis; L-seryl-tRNA(Sec) from L-serine and tRNA(Sec): step 1/1. In terms of biological role, catalyzes the attachment of serine to tRNA(Ser). Is also able to aminoacylate tRNA(Sec) with serine, to form the misacylated tRNA L-seryl-tRNA(Sec), which will be further converted into selenocysteinyl-tRNA(Sec). In Psychrobacter sp. (strain PRwf-1), this protein is Serine--tRNA ligase.